We begin with the raw amino-acid sequence, 1036 residues long: PDZ domain-containing RING finger protein 4 (1036 aa).

The segment at 18–56 (CKLCGQVLEEPLCTPCGHVFCASCLLPWAVRRRRCPLQC) adopts an RING-type; degenerate zinc-finger fold. The span at 129–160 (ARGGCGPTPRAGRGGGARGGPPGGRWGRGRGP) shows a compositional bias: gly residues. The interval 129-161 (ARGGCGPTPRAGRGGGARGGPPGGRWGRGRGPG) is disordered. 2 PDZ domains span residues 224-314 (TIVL…LRRT) and 402-486 (EVEL…VARP). A disordered region spans residues 515–590 (HNEAMQPTAN…SLKSKRDLGQ (76 aa)). A compositionally biased stretch (basic and acidic residues) spans 548-566 (NHEKDSGVGRTDESLRNDE). The stretch at 655-689 (NQGEQEGVEHELQLLNEELRNIELECQNIMQAHRL) forms a coiled coil. A compositionally biased stretch (basic and acidic residues) spans 726–735 (EHPEKSDKDS). The tract at residues 726 to 819 (EHPEKSDKDS…VLEGSKLPDQ (94 aa)) is disordered. Residues 736 to 750 (SSAYNTAESCRSTPL) show a composition bias toward polar residues. Residues 774-799 (STMAATQSSSGQSSKESTSTKAKTTE) are compositionally biased toward low complexity. A compositionally biased stretch (basic and acidic residues) spans 805–819 (ESKEKVLEGSKLPDQ).

The polypeptide is PDZ domain-containing RING finger protein 4 (PDZRN4) (Homo sapiens (Human)).